The following is a 119-amino-acid chain: DNA-directed RNA polymerase subunit omega (119 aa).

It belongs to the RNA polymerase subunit omega family. As to quaternary structure, the RNAP catalytic core consists of 2 alpha, 1 beta, 1 beta' and 1 omega subunit. When a sigma factor is associated with the core the holoenzyme is formed, which can initiate transcription.

The catalysed reaction is RNA(n) + a ribonucleoside 5'-triphosphate = RNA(n+1) + diphosphate. Promotes RNA polymerase assembly. Latches the N- and C-terminal regions of the beta' subunit thereby facilitating its interaction with the beta and alpha subunits. In Caulobacter sp. (strain K31), this protein is DNA-directed RNA polymerase subunit omega.